A 217-amino-acid chain; its full sequence is MOB kinase activator 3A (217 aa).

Residues cysteine 83, cysteine 88, histidine 165, and histidine 170 each contribute to the Zn(2+) site.

The protein belongs to the MOB1/phocein family.

May regulate the activity of kinases. The protein is MOB kinase activator 3A (Mob3a) of Mus musculus (Mouse).